The primary structure comprises 472 residues: METNIVEVENFVQQSEERRGSAFTQEVKRYLERYPNTQYVDVLLTDLNGCFRGKRIPVSSLKKLEKGCYFPASVFAMDILGNVVEEAGLGQEMGEPDRTCVPVLGSLTPSAADPEFIGQMLLTMVDEDGAPFDVEPRNVLNRLWQQLRQRGLFPVVAVELEFYLLDRQRDAEGYLQPPCAPGTDDRNTQSQVYSVDNLNHFADVLNDIDELAQLQLIPADGAVAEASPGQFEINLYHTDNVLEACDDALALKRLVRLMAEKHKMHATFMAKPYEEHAGSGMHIHISMQNNRGENVLSDAEGEDSPLLKKMLAGMIDLMPSSMALLAPNVNSYRRFQPGMYVPTQASWGHNNRTVALRIPCGDRHNHRVEYRVAGADANPYLVMAAIFAGILHGLDNELPLQEEVEGNGLEQEGLPFPIRQSDALGEFIENDHLRRYLGERFCHVYHACKNDELLQFERLITETEIEWMLKNA.

The GS beta-grasp domain maps to P35 to G129. Residues P136–A472 form the GS catalytic domain.

This sequence belongs to the glutamine synthetase family. As to quaternary structure, dodecamer. Mg(2+) is required as a cofactor. It depends on Mn(2+) as a cofactor.

It catalyses the reaction putrescine + L-glutamate + ATP = gamma-L-glutamylputrescine + ADP + phosphate + H(+). It functions in the pathway amine and polyamine degradation; putrescine degradation; 4-aminobutanoate from putrescine: step 1/4. In terms of biological role, involved in the breakdown of putrescine. Catalyzes the ATP-dependent gamma-glutamylation of putrescine, producing gamma-L-glutamylputrescine. Absolutely essential to utilize putrescine as both nitrogen and carbon sources and to decrease the toxicity of putrescine, which can lead to inhibition of cell growth and protein synthesis. In vitro is also able to use several diamines, and spermidine and spermine, instead of putrescine, but with a much lower activity, and cannot catalyze the gamma-glutamylation of ornithine or GABA. The polypeptide is Gamma-glutamylputrescine synthetase PuuA (Escherichia coli (strain K12)).